Here is an 89-residue protein sequence, read N- to C-terminus: Small ribosomal subunit protein uS15 (89 aa).

The protein belongs to the universal ribosomal protein uS15 family. As to quaternary structure, part of the 30S ribosomal subunit. Forms a bridge to the 50S subunit in the 70S ribosome, contacting the 23S rRNA.

Its function is as follows. One of the primary rRNA binding proteins, it binds directly to 16S rRNA where it helps nucleate assembly of the platform of the 30S subunit by binding and bridging several RNA helices of the 16S rRNA. Functionally, forms an intersubunit bridge (bridge B4) with the 23S rRNA of the 50S subunit in the ribosome. This is Small ribosomal subunit protein uS15 from Lactobacillus helveticus (strain DPC 4571).